The sequence spans 358 residues: Ion-translocating oxidoreductase complex subunit D (358 aa).

Helical transmembrane passes span 19 to 39 (IMLW…YYFG), 41 to 61 (GVVL…FIAI), 79 to 99 (LTAL…VIII), and 125 to 145 (IGYV…MPPI). Residue Thr-186 is modified to FMN phosphoryl threonine. 5 helical membrane-spanning segments follow: residues 220–240 (FAQG…FLIL), 248–268 (IPVA…FTGF), 271–291 (LSAI…FIAT), 297–317 (SITP…VYLI), and 321–341 (GNYP…VPLI).

Belongs to the NqrB/RnfD family. In terms of assembly, the complex is composed of six subunits: RnfA, RnfB, RnfC, RnfD, RnfE and RnfG. It depends on FMN as a cofactor.

It localises to the cell inner membrane. Its function is as follows. Part of a membrane-bound complex that couples electron transfer with translocation of ions across the membrane. This is Ion-translocating oxidoreductase complex subunit D from Haemophilus influenzae (strain PittGG).